The following is a 469-amino-acid chain: 23S rRNA (uracil(1939)-C(5))-methyltransferase RlmD (469 aa).

Positions 11–69 (PKTSNQRLTVTVDKLDMNGVGVARWQNKPIFIAGVLPDEIVDVKVIEQKSKYARAKLIS) constitute a TRAM domain. [4Fe-4S] cluster contacts are provided by cysteine 82, cysteine 88, cysteine 91, and cysteine 178. Positions 300, 329, 334, 350, 377, and 399 each coordinate S-adenosyl-L-methionine. Cysteine 425 functions as the Nucleophile in the catalytic mechanism.

The protein belongs to the class I-like SAM-binding methyltransferase superfamily. RNA M5U methyltransferase family. RlmD subfamily.

The catalysed reaction is uridine(1939) in 23S rRNA + S-adenosyl-L-methionine = 5-methyluridine(1939) in 23S rRNA + S-adenosyl-L-homocysteine + H(+). Functionally, catalyzes the formation of 5-methyl-uridine at position 1939 (m5U1939) in 23S rRNA. The protein is 23S rRNA (uracil(1939)-C(5))-methyltransferase RlmD of Colwellia psychrerythraea (strain 34H / ATCC BAA-681) (Vibrio psychroerythus).